A 246-amino-acid polypeptide reads, in one-letter code: 14-3-3 protein eta (246 aa).

Gly-2 is subject to N-acetylglycine. Ser-25 and Ser-59 each carry phosphoserine.

The protein belongs to the 14-3-3 family. As to quaternary structure, homodimer. Interacts with many nuclear hormone receptors and cofactors including AR, ESR1, ESR2, MC2R, NR3C1, NRIP1, PPARBP and THRA. Interacts with ABL1 (phosphorylated form); the interaction retains it in the cytoplasm. Weakly interacts with CDKN1B. Interacts with ARHGEF28 and CDK16. Interacts with GAB2. Interacts with KCNK18 in a phosphorylation-dependent manner. Interacts with SAMSN1. Interacts with the 'Ser-241' phosphorylated form of PDPK1. Interacts with the 'Thr-369' phosphorylated form of DAPK2. Interacts with PI4KB, TBC1D22A and TBC1D22B. Interacts with SLITRK1. Interacts with MEFV. In terms of processing, phosphorylated on Ser-59 by protein kinase C delta type catalytic subunit in a sphingosine-dependent fashion.

The protein localises to the cytoplasm. Adapter protein implicated in the regulation of a large spectrum of both general and specialized signaling pathways. Binds to a large number of partners, usually by recognition of a phosphoserine or phosphothreonine motif. Binding generally results in the modulation of the activity of the binding partner. Negatively regulates the kinase activity of PDPK1. The protein is 14-3-3 protein eta (YWHAH) of Bos taurus (Bovine).